The chain runs to 299 residues: Putative zinc-binding protein ORF12 (299 aa).

This Ictaluridae (bullhead catfishes) protein is Putative zinc-binding protein ORF12 (ORF12).